The primary structure comprises 194 residues: Histone H1.0 (194 aa).

An N-acetylmethionine modification is found at M1. Over residues 1 to 11 (MTENSTSTPAA) the composition is skewed to low complexity. The tract at residues 1 to 29 (MTENSTSTPAAKPKRAKASKKSTDHPKYS) is disordered. Residue T2 is modified to N-acetylthreonine; in Histone H1.0, N-terminally processed. The region spanning 24–97 (DHPKYSDMIV…GASGSFRLAK (74 aa)) is the H15 domain. A Citrulline modification is found at R42. The segment at 83–194 (QTKGVGASGS…SSAKRTGKKK (112 aa)) is disordered. S104 bears the ADP-ribosylserine mark. The span at 105–194 (VAFKKTKKEV…SSAKRTGKKK (90 aa)) shows a compositional bias: basic residues.

It belongs to the histone H1/H5 family. In terms of processing, ADP-ribosylated on Ser-104 in response to DNA damage.

The protein localises to the nucleus. It is found in the chromosome. Its function is as follows. Histones H1 are necessary for the condensation of nucleosome chains into higher-order structures. The histones H1.0 are found in cells that are in terminal stages of differentiation or that have low rates of cell division. The sequence is that of Histone H1.0 (H1-0) from Bos taurus (Bovine).